The chain runs to 212 residues: Riboflavin kinase (212 aa).

The interval methionine 1–serine 87 is H-T-H motif-like. Positions glycine 88 to valine 212 are riboflavin kinase. Residue glycine 97–alanine 102 participates in CDP binding. Mg(2+) contacts are provided by threonine 124 and asparagine 126. Residues threonine 180 and glutamate 188 each coordinate FMN. Valine 193–arginine 196 is a binding site for CDP.

The protein belongs to the archaeal riboflavin kinase family. The cofactor is Mg(2+).

It catalyses the reaction riboflavin + CTP = CDP + FMN + H(+). The protein operates within cofactor biosynthesis; FMN biosynthesis; FMN from riboflavin (CTP route): step 1/1. Functionally, catalyzes the CTP-dependent phosphorylation of riboflavin (vitamin B2) to form flavin mononucleotide (FMN). This Pyrococcus abyssi (strain GE5 / Orsay) protein is Riboflavin kinase (ribK).